Reading from the N-terminus, the 286-residue chain is 2-hydroxy-6-oxononadienedioate/2-hydroxy-6-oxononatrienedioate hydrolase 2 (286 aa).

Catalysis depends on His-266, which acts as the Proton acceptor.

This sequence belongs to the AB hydrolase superfamily. MhpC family. In terms of assembly, homodimer.

The catalysed reaction is (2Z,4E)-2-hydroxy-6-oxonona-2,4-dienedioate + H2O = (2Z)-2-hydroxypenta-2,4-dienoate + succinate + H(+). It catalyses the reaction (2Z,4E,7E)-2-hydroxy-6-oxonona-2,4,7-trienedioate + H2O = (2Z)-2-hydroxypenta-2,4-dienoate + fumarate + H(+). It functions in the pathway aromatic compound metabolism; 3-phenylpropanoate degradation. Functionally, catalyzes the cleavage of the C5-C6 bond of 2-hydroxy-6-oxononadienedioate and 2-hydroxy-6-oxononatrienedioate, a dienol ring fission product of the bacterial meta-cleavage pathway for degradation of phenylpropionic acid. The chain is 2-hydroxy-6-oxononadienedioate/2-hydroxy-6-oxononatrienedioate hydrolase 2 from Pseudomonas putida (Arthrobacter siderocapsulatus).